Here is a 491-residue protein sequence, read N- to C-terminus: MATKKRALSFSEKHQKLVDEKFRKSLNIQVMNKLERQAKNQVVQNENDEKVERQRFLRVLQNEQFELDMEEAIQKAEANKMLRDRQLEQEERLANELARLKHESLKDKKMRQQVRENSIELRELEQKLKAAYMNKERAAQIVEKDAMKYEQMKRDAEIERIMMEEHDRLLKEESAKQERRNKERAQYYLDLEKQLEDQERRKQEAYEQLLKEKLMIDEIVRKIYEEDQVERQQKLEKKNAIQKYIEEFQRAQDFWRQKKREEMEEENRKIIEFANIQEQREGERMARVHEIEEKRVQRQNLLMKQLEETLRQRDDLEQVRQELYQEEQAEIIKLKVKEEAELRLRRQREMKQDFEDQMALKELILQAAKEEEETFKKAMLAKFAEDDRIELMNAQKQRMKQLEHKRAVEKLIEERRSQFLADKQRELEELQLQQRRQGCINEIIEEERLRLLKEHAAKLLGYLPKGVFKREDDVDMLGEEFRKAYQKRDGV.

Positions 1 to 314 (MATKKRALSF…QLEETLRQRD (314 aa)) are interaction with BBOF1. 2 coiled-coil regions span residues 29–253 (QVMN…RAQD) and 287–410 (RVHE…AVEK). A Phosphotyrosine modification is found at Tyr-188.

The protein belongs to the MNS1 family. Able to form oligomers. Microtubule inner protein component of sperm flagellar doublet microtubules. Interacts with ODAD1. Interacts with BBOF1. As to expression, high expression in testis. Expressed in pachytene spermatocytes and post-meiotic spermatids.

It is found in the nucleus. It localises to the cytoplasm. Its subcellular location is the cytoskeleton. The protein resides in the flagellum axoneme. The protein localises to the cilium axoneme. Its function is as follows. Microtubule inner protein (MIP) part of the dynein-decorated doublet microtubules (DMTs) in cilia axoneme, which is required for motile cilia beating. May play a role in the control of meiotic division and germ cell differentiation through regulation of pairing and recombination during meiosis. Required for sperm flagella assembly. May play a role in the assembly and function of the outer dynein arm-docking complex (ODA-DC). ODA-DC mediates outer dynein arms (ODA) binding onto the axonemal doublet microtubules. The polypeptide is Meiosis-specific nuclear structural protein 1 (Mns1) (Mus musculus (Mouse)).